We begin with the raw amino-acid sequence, 213 residues long: Phosphoenolpyruvate guanylyltransferase (213 aa).

Residues T146, G161, and S164 each coordinate phosphoenolpyruvate.

It belongs to the CofC family.

It carries out the reaction phosphoenolpyruvate + GTP + H(+) = enolpyruvoyl-2-diphospho-5'-guanosine + diphosphate. It participates in cofactor biosynthesis; coenzyme F420 biosynthesis. Guanylyltransferase that catalyzes the activation of phosphoenolpyruvate (PEP) as enolpyruvoyl-2-diphospho-5'-guanosine, via the condensation of PEP with GTP. It is involved in the biosynthesis of coenzyme F420, a hydride carrier cofactor. This chain is Phosphoenolpyruvate guanylyltransferase, found in Mycolicibacterium vanbaalenii (strain DSM 7251 / JCM 13017 / BCRC 16820 / KCTC 9966 / NRRL B-24157 / PYR-1) (Mycobacterium vanbaalenii).